Consider the following 236-residue polypeptide: tRNA (guanine-N(7)-)-methyltransferase (236 aa).

Residues Glu68, Glu93, Asp120, and Asp143 each coordinate S-adenosyl-L-methionine. Asp143 is a catalytic residue. Substrate is bound by residues Lys147, Asp179, and 212 to 215 (TKFE).

The protein belongs to the class I-like SAM-binding methyltransferase superfamily. TrmB family.

The catalysed reaction is guanosine(46) in tRNA + S-adenosyl-L-methionine = N(7)-methylguanosine(46) in tRNA + S-adenosyl-L-homocysteine. It participates in tRNA modification; N(7)-methylguanine-tRNA biosynthesis. Functionally, catalyzes the formation of N(7)-methylguanine at position 46 (m7G46) in tRNA. This Nitrosococcus oceani (strain ATCC 19707 / BCRC 17464 / JCM 30415 / NCIMB 11848 / C-107) protein is tRNA (guanine-N(7)-)-methyltransferase.